The following is a 419-amino-acid chain: Methylthioribose kinase (419 aa).

ATP is bound by residues asparagine 49 and lysine 64. Substrate is bound at residue aspartate 239. Position 256-258 (256-258) interacts with ATP; the sequence is DPE. Residue arginine 365 participates in substrate binding.

It belongs to the methylthioribose kinase family. In terms of assembly, homodimer.

It carries out the reaction 5-(methylsulfanyl)-D-ribose + ATP = 5-(methylsulfanyl)-alpha-D-ribose 1-phosphate + ADP + H(+). It catalyses the reaction 5-deoxy-D-ribose + ATP = 5-deoxy-alpha-D-ribose 1-phosphate + ADP + H(+). It functions in the pathway amino-acid biosynthesis; L-methionine biosynthesis via salvage pathway; S-methyl-5-thio-alpha-D-ribose 1-phosphate from S-methyl-5'-thioadenosine (hydrolase route): step 2/2. Functionally, catalyzes the phosphorylation of methylthioribose into methylthioribose-1-phosphate. Also catalyzes the phosphorylation of 5-deoxyribose to 5-deoxyribose-1-phosphate. Part of a bifunctional DHAP-shunt salvage pathway for SAM by-products. This Escherichia coli O45:K1 (strain S88 / ExPEC) protein is Methylthioribose kinase.